A 132-amino-acid polypeptide reads, in one-letter code: Small ribosomal subunit protein uS8 (132 aa).

The protein belongs to the universal ribosomal protein uS8 family. In terms of assembly, part of the 30S ribosomal subunit. Contacts proteins S5 and S12.

Functionally, one of the primary rRNA binding proteins, it binds directly to 16S rRNA central domain where it helps coordinate assembly of the platform of the 30S subunit. This Lysinibacillus sphaericus (strain C3-41) protein is Small ribosomal subunit protein uS8.